Reading from the N-terminus, the 159-residue chain is Large ribosomal subunit protein bL17 (159 aa).

The span at 119–138 (PVTPKAKPAKSTAKAAPKSK) shows a compositional bias: low complexity. The interval 119 to 159 (PVTPKAKPAKSTAKAAPKSKAPVEETPDEPASEETAEAEAD) is disordered. A compositionally biased stretch (acidic residues) spans 143–159 (ETPDEPASEETAEAEAD).

This sequence belongs to the bacterial ribosomal protein bL17 family. As to quaternary structure, part of the 50S ribosomal subunit. Contacts protein L32.

The polypeptide is Large ribosomal subunit protein bL17 (Leifsonia xyli subsp. xyli (strain CTCB07)).